The primary structure comprises 501 residues: MTTFFNKLFTGASSSSSAAASSGMDLGSMESLCAAINELCSEKHVSENVGELAAGIVRKNKELFEKKSNDVEAFLLHCSPNVGSAAMVAAIKGMFDTSAAKNNETGTDRAVELLNHYVDENNFVGGHLKLVPEIIFPLLRDVGLYCLEKKNKPEIGQRIIMKALGSMFPRNGSNAPNVLTSAHGVLFACALETKDYASVEPFIDLHVDEIANENCIQDQEKSDNRERDFGDVFLGRMKKGAAFGSQPVAHNPHLHPKYVLDYLYNGACILIELKRFEDALFLLEICVGMPAFSVQDQHLDSFKKYVLISLILKGKVDVTENGDKSAIRHFKTKSPEYKQFSEIRFSRSSNTHSAVESLVKSAKDRLRKDGNTEIAKYLVVEMKKKTIMSLTRMFTSIRISEIEELAFLKSRDQVTELIGQLVEEQRITVRIDGDMVFWTELSPVPSKNDVENKIRIVDHLNTLLHEKNTTMKAGSGRMRPSVMYNEDEGLSMPPTESKFFS.

The PCI domain occupies 275–445; that stretch reads RFEDALFLLE…VFWTELSPVP (171 aa).

The protein belongs to the CSN3 family. As to quaternary structure, component of the CSN complex, probably composed of csn-1, csn-2, csn-3, csn-4, csn-5, csn-6 and csn-7. Within the complex it probably interacts directly with csn-2 and csn-4. May interact with itself.

The protein resides in the cytoplasm. The protein localises to the nucleus. Component of the COP9 signalosome complex (CSN), a complex involved in various cellular and developmental processes. The CSN complex is an essential regulator of the ubiquitin (Ubl) conjugation pathway by mediating the deneddylation of the cullin subunits of the SCF-type E3 ligase complexes, leading to decrease the Ubl ligase activity of SCF. The CSN complex plays an essential role in embryogenesis and oogenesis and is required to regulate microtubule stability in the early embryo. Mediates mei-3/katanin targeting for degradation at the meiosis to mitosis transition via deneddylation of cul-3. The polypeptide is COP9 signalosome complex subunit 3 (csn-3) (Caenorhabditis elegans).